A 402-amino-acid polypeptide reads, in one-letter code: Cysteine protease atg4 (402 aa).

A disordered region spans residues 46-68 (ETADESRNPDHGQQQNTNTSAPG). A compositionally biased stretch (polar residues) spans 56–66 (HGQQQNTNTSA). The Nucleophile role is filled by Cys-128. Catalysis depends on residues Asp-302 and His-304.

The protein belongs to the peptidase C54 family.

It is found in the cytoplasm. The protein localises to the nucleus. Its subcellular location is the preautophagosomal structure. It carries out the reaction [protein]-C-terminal L-amino acid-glycyl-phosphatidylethanolamide + H2O = [protein]-C-terminal L-amino acid-glycine + a 1,2-diacyl-sn-glycero-3-phosphoethanolamine. Functionally, cysteine protease that plays a key role in cytoplasm to vacuole transport (Cvt) and autophagy by mediating both proteolytic activation and delipidation of ATG8. Required for selective autophagic degradation of the nucleus (nucleophagy) as well as for mitophagy which contributes to regulate mitochondrial quantity and quality by eliminating the mitochondria to a basal level to fulfill cellular energy requirements and preventing excess ROS production. The protease activity is required for proteolytic activation of ATG8: cleaves the C-terminal amino acid of ATG8 to reveal a C-terminal glycine. ATG8 ubiquitin-like activity requires the exposure of the glycine at the C-terminus for its conjugation to phosphatidylethanolamine (PE) and its insertion to membranes, which is necessary for autophagy. The ATG8-PE conjugate mediates tethering between adjacent membranes and stimulates membrane hemifusion, leading to expansion of the autophagosomal membrane during autophagy. In addition to the protease activity, also catalyzes deconjugation of PE-conjugated forms of ATG8 during macroautophagy: ATG8 delipidation is required to release the protein from membranes, which facilitates multiple events during macroautophagy, and especially for efficient autophagosome biogenesis, the assembly of ATG9-containing tubulovesicular clusters into phagophores/autophagosomes, and for the disassembly of PAS-associated ATG components. ATG8 delipidation by ATG4 also recycles ATG8-PE generated on inappropriate membranes to maintain a reservoir of unlipidated ATG8 that is required for autophagosome formation at the PAS. The sequence is that of Cysteine protease atg4 (atg4) from Emericella nidulans (strain FGSC A4 / ATCC 38163 / CBS 112.46 / NRRL 194 / M139) (Aspergillus nidulans).